Consider the following 77-residue polypeptide: Acyl carrier protein (77 aa).

One can recognise a Carrier domain in the interval 2–77; that stretch reads STVEERVKKI…DAIDYIVAHT (76 aa). Serine 37 bears the O-(pantetheine 4'-phosphoryl)serine mark.

The protein belongs to the acyl carrier protein (ACP) family. 4'-phosphopantetheine is transferred from CoA to a specific serine of apo-ACP by AcpS. This modification is essential for activity because fatty acids are bound in thioester linkage to the sulfhydryl of the prosthetic group.

The protein localises to the cytoplasm. It participates in lipid metabolism; fatty acid biosynthesis. Its function is as follows. Carrier of the growing fatty acid chain in fatty acid biosynthesis. This Marinobacter nauticus (strain ATCC 700491 / DSM 11845 / VT8) (Marinobacter aquaeolei) protein is Acyl carrier protein.